The sequence spans 115 residues: Large ribosomal subunit protein uL24 (115 aa).

The tract at residues 49–68 (NMKTKHHPPSKDQEKGSITK) is disordered.

It belongs to the universal ribosomal protein uL24 family. As to quaternary structure, part of the 50S ribosomal subunit.

One of two assembly initiator proteins, it binds directly to the 5'-end of the 23S rRNA, where it nucleates assembly of the 50S subunit. Its function is as follows. One of the proteins that surrounds the polypeptide exit tunnel on the outside of the subunit. The protein is Large ribosomal subunit protein uL24 of Phytoplasma australiense.